The chain runs to 138 residues: von Willebrand factor C domain-containing protein 2-like (138 aa).

The N-terminal stretch at 1-21 is a signal peptide; it reads MALHIHEACILLLVIPGLVTS. A VWFC domain is found at 51 to 110; it reads KGCVDDSGFVYKLGERFFPGHSNCPCVCALDGPVCDQPECPKIHPKCTKVEHNGCCPECK.

Peripherally associated with AMPAR complex. AMPAR complex consists of an inner core made of 4 pore-forming GluA/GRIA proteins (GRIA1, GRIA2, GRIA3 and GRIA4) and 4 major auxiliary subunits arranged in a twofold symmetry. One of the two pairs of distinct binding sites is occupied either by CNIH2, CNIH3 or CACNG2, CACNG3. The other harbors CACNG2, CACNG3, CACNG4, CACNG8 or GSG1L. This inner core of AMPAR complex is complemented by outer core constituents binding directly to the GluA/GRIA proteins at sites distinct from the interaction sites of the inner core constituents. Outer core constituents include at least PRRT1, PRRT2, CKAMP44/SHISA9, FRRS1L and NRN1. The proteins of the inner and outer core serve as a platform for other, more peripherally associated AMPAR constituents, including VWC2L. Alone or in combination, these auxiliary subunits control the gating and pharmacology of the AMPAR complex and profoundly impact their biogenesis and protein processing.

The protein localises to the secreted. It localises to the synapse. May play a role in neurogenesis. May play a role in bone differentiation and matrix mineralization. The sequence is that of von Willebrand factor C domain-containing protein 2-like (VWC2L) from Macaca fascicularis (Crab-eating macaque).